A 702-amino-acid polypeptide reads, in one-letter code: Methionine--tRNA ligase (702 aa).

The 'HIGH' region motif lies at Pro-14–His-24. Cys-146, Cys-149, Cys-159, and Cys-162 together coordinate Zn(2+). A 'KMSKS' region motif is present at residues Lys-344 to Ser-348. An ATP-binding site is contributed by Lys-347. The tRNA-binding domain maps to Asp-601–Gln-702.

Belongs to the class-I aminoacyl-tRNA synthetase family. MetG type 1 subfamily. As to quaternary structure, homodimer. It depends on Zn(2+) as a cofactor.

It is found in the cytoplasm. It carries out the reaction tRNA(Met) + L-methionine + ATP = L-methionyl-tRNA(Met) + AMP + diphosphate. In terms of biological role, is required not only for elongation of protein synthesis but also for the initiation of all mRNA translation through initiator tRNA(fMet) aminoacylation. The protein is Methionine--tRNA ligase of Chlorobium phaeovibrioides (strain DSM 265 / 1930) (Prosthecochloris vibrioformis (strain DSM 265)).